The chain runs to 111 residues: Phosphoribosyl-ATP pyrophosphatase (111 aa).

It belongs to the PRA-PH family.

Its subcellular location is the cytoplasm. It carries out the reaction 1-(5-phospho-beta-D-ribosyl)-ATP + H2O = 1-(5-phospho-beta-D-ribosyl)-5'-AMP + diphosphate + H(+). It participates in amino-acid biosynthesis; L-histidine biosynthesis; L-histidine from 5-phospho-alpha-D-ribose 1-diphosphate: step 2/9. The sequence is that of Phosphoribosyl-ATP pyrophosphatase from Azotobacter vinelandii (strain DJ / ATCC BAA-1303).